The sequence spans 115 residues: uncharacterized protein (115 aa).

A signal peptide spans 1–24 (MLPLCLTFLSFFLSLGGSFKAVMT). 2 helical membrane passes run 39–59 (FWIF…ALAI) and 93–113 (YLTS…FLLS).

Its subcellular location is the membrane. This is an uncharacterized protein from Saccharomyces cerevisiae (strain ATCC 204508 / S288c) (Baker's yeast).